A 456-amino-acid chain; its full sequence is Armadillo repeat-containing X-linked protein 1 (456 aa).

Residues methionine 1 to glutamate 6 lie on the Mitochondrial intermembrane side of the membrane. Mitochondrion outer membrane (MOM)-targeting sequence regions lie at residues methionine 1 to glutamate 6 and arginine 26 to lysine 36. The helical; Signal-anchor transmembrane segment at alanine 7–tryptophan 29 threads the bilayer. Residues glycine 30–leucine 456 lie on the Cytoplasmic side of the membrane. Disordered stretches follow at residues leucine 37–glycine 106 and arginine 139–threonine 186. Over residues tryptophan 38–glutamate 50 the composition is skewed to acidic residues. Basic and acidic residues-rich tracts occupy residues lysine 51–lysine 62 and lysine 72–valine 81. Residues serine 162–serine 180 show a composition bias toward basic residues. ARM repeat units follow at residues proline 198–alanine 238, serine 240–valine 279, proline 361–aspartate 401, and serine 418–leucine 456.

This sequence belongs to the eutherian X-chromosome-specific Armcx family. As to quaternary structure, interacts with MIRO1. In terms of tissue distribution, widely expressed in the adult nervous tissue, especially in the forebrain, including the cerebral cortex, hippocampus and thalamus.

The protein localises to the mitochondrion. The protein resides in the mitochondrion outer membrane. In terms of biological role, regulates mitochondrial transport during axon regeneration. Increases the proportion of motile mitochondria by recruiting stationary mitochondria into the motile pool. Enhances mitochondria movement and neurite growth in both adult axons and embryonic neurons. Promotes neuronal survival and axon regeneration after nerve injury. May link mitochondria to the Trak1-kinesin motor complex via its interaction with Miro1. The polypeptide is Armadillo repeat-containing X-linked protein 1 (Armcx1) (Mus musculus (Mouse)).